We begin with the raw amino-acid sequence, 642 residues long: Threonine--tRNA ligase (642 aa).

A TGS domain is found at 1-61; that stretch reads MPVITLPDGS…ENDAQLSIIT (61 aa). The tract at residues 243–534 is catalytic; it reads DHRKIGKQLD…LTEEFAGFFP (292 aa). At Lys286 the chain carries N6-acetyllysine. The Zn(2+) site is built by Cys334, His385, and His511.

This sequence belongs to the class-II aminoacyl-tRNA synthetase family. As to quaternary structure, homodimer. The cofactor is Zn(2+).

The protein resides in the cytoplasm. It catalyses the reaction tRNA(Thr) + L-threonine + ATP = L-threonyl-tRNA(Thr) + AMP + diphosphate + H(+). Its function is as follows. Catalyzes the attachment of threonine to tRNA(Thr) in a two-step reaction: L-threonine is first activated by ATP to form Thr-AMP and then transferred to the acceptor end of tRNA(Thr). Also edits incorrectly charged L-seryl-tRNA(Thr). This chain is Threonine--tRNA ligase, found in Shigella boydii serotype 18 (strain CDC 3083-94 / BS512).